A 393-amino-acid polypeptide reads, in one-letter code: NAD(P)H-quinone oxidoreductase subunit H, chloroplastic (393 aa).

The protein belongs to the complex I 49 kDa subunit family. As to quaternary structure, NDH is composed of at least 16 different subunits, 5 of which are encoded in the nucleus.

It is found in the plastid. It localises to the chloroplast thylakoid membrane. It catalyses the reaction a plastoquinone + NADH + (n+1) H(+)(in) = a plastoquinol + NAD(+) + n H(+)(out). It carries out the reaction a plastoquinone + NADPH + (n+1) H(+)(in) = a plastoquinol + NADP(+) + n H(+)(out). NDH shuttles electrons from NAD(P)H:plastoquinone, via FMN and iron-sulfur (Fe-S) centers, to quinones in the photosynthetic chain and possibly in a chloroplast respiratory chain. The immediate electron acceptor for the enzyme in this species is believed to be plastoquinone. Couples the redox reaction to proton translocation, and thus conserves the redox energy in a proton gradient. The chain is NAD(P)H-quinone oxidoreductase subunit H, chloroplastic from Agrostis stolonifera (Creeping bentgrass).